The primary structure comprises 284 residues: Phosphoribosylaminoimidazole-succinocarboxamide synthase (284 aa).

Belongs to the SAICAR synthetase family.

It catalyses the reaction 5-amino-1-(5-phospho-D-ribosyl)imidazole-4-carboxylate + L-aspartate + ATP = (2S)-2-[5-amino-1-(5-phospho-beta-D-ribosyl)imidazole-4-carboxamido]succinate + ADP + phosphate + 2 H(+). It functions in the pathway purine metabolism; IMP biosynthesis via de novo pathway; 5-amino-1-(5-phospho-D-ribosyl)imidazole-4-carboxamide from 5-amino-1-(5-phospho-D-ribosyl)imidazole-4-carboxylate: step 1/2. The chain is Phosphoribosylaminoimidazole-succinocarboxamide synthase from Chromobacterium violaceum (strain ATCC 12472 / DSM 30191 / JCM 1249 / CCUG 213 / NBRC 12614 / NCIMB 9131 / NCTC 9757 / MK).